The sequence spans 410 residues: MYVVTPPQRSGFGSDCDLRVYQTWKGSNIFCLQGRFIFGPDVRSLGLTISLIVAPVTIFCIFVASKLMDDFSDSWGVSIILVAVVFTIYDLILLMLTSGRDPGIIPRNSHPPEPEVVDGNTGSGTSQTPRLPRVKEVEVNGKVFKVKYCDTCMLYRPPRCSHCSICNNCVERFDHHCPWVGQCIAQRNYRFFFMFVFSTTLLCVYVFAFCCVYIKKIKESEDISILKAMLKTPASIALILYTFISTFFVGGLTCFHLYLISTNQTTYENFRYSYDRHSNPHNKGVVDNFKEIFFSPIPPSKNNFRAMVPRENPMPSRSVVGGFMSPNMGKANDDIEMGRKGVWAMAEHGDGKDGNNNERFHVNDNELNELSPDMGNIVNGDEQINRPNNHPRNANWEMSPEVMALSARRA.

2 helical membrane passes run 45–65 (LGLT…FVAS) and 76–96 (GVSI…LLML). Residues 108–129 (NSHPPEPEVVDGNTGSGTSQTP) form a disordered region. In terms of domain architecture, DHHC spans 147 to 197 (KYCDTCMLYRPPRCSHCSICNNCVERFDHHCPWVGQCIAQRNYRFFFMFVF). Cys177 acts as the S-palmitoyl cysteine intermediate in catalysis. A run of 2 helical transmembrane segments spans residues 191–211 (FFFM…AFCC) and 235–255 (SIAL…LTCF). Phosphoserine is present on Ser325.

It belongs to the DHHC palmitoyltransferase family.

It is found in the cell membrane. The catalysed reaction is L-cysteinyl-[protein] + hexadecanoyl-CoA = S-hexadecanoyl-L-cysteinyl-[protein] + CoA. In terms of biological role, palmitoyl acyltransferase. This Arabidopsis thaliana (Mouse-ear cress) protein is Probable protein S-acyltransferase 6 (PAT06).